The primary structure comprises 290 residues: uncharacterized protein (290 aa).

Residues 1 to 61 (MVMNMNHLHI…RDKHHGLMLT (61 aa)) enclose the HTH lysR-type domain. The H-T-H motif DNA-binding region spans 20–39 (ITEAAKELFISQPAVSKAIK).

This sequence belongs to the LysR transcriptional regulatory family.

This is an uncharacterized protein from Bacillus subtilis (strain 168).